We begin with the raw amino-acid sequence, 176 residues long: Probable RNA-binding protein EIF1AD (176 aa).

The S1-like domain occupies 5–89 (TKKRYITNKV…VKGEIEYILD (85 aa)). Residues 117-128 (AKRGKANDKMID) are compositionally biased toward basic and acidic residues. A disordered region spans residues 117–176 (AKRGKANDKMIDDDMLPPSESEEEDDESEDEIEDTYDEDEETDDEEFDTYNPNRMQAPSK). A compositionally biased stretch (acidic residues) spans 129-164 (DDMLPPSESEEEDDESEDEIEDTYDEDEETDDEEFD). The span at 166-176 (YNPNRMQAPSK) shows a compositional bias: polar residues.

The protein belongs to the EIF1AD family.

The polypeptide is Probable RNA-binding protein EIF1AD (Caenorhabditis briggsae).